We begin with the raw amino-acid sequence, 133 residues long: Nickel-responsive regulator (133 aa).

The Ni(2+) site is built by His-76, His-87, His-89, and Cys-95.

Belongs to the transcriptional regulatory CopG/NikR family. In terms of assembly, homotetramer. Requires Ni(2+) as cofactor.

Its function is as follows. Transcriptional repressor of the nikABCDE operon. Is active in the presence of excessive concentrations of intracellular nickel. This is Nickel-responsive regulator from Escherichia coli (strain SE11).